The chain runs to 45 residues: Large ribosomal subunit protein bL34 (45 aa).

The protein belongs to the bacterial ribosomal protein bL34 family.

In Paenarthrobacter aurescens (strain TC1), this protein is Large ribosomal subunit protein bL34.